The following is a 448-amino-acid chain: UDP-N-acetylmuramoylalanine--D-glutamate ligase (448 aa).

UDP-N-acetyl-alpha-D-muramoyl-L-alanine-binding residues include K17, S18, T38, R39, and G78. Residue 116–122 (GSNAKST) coordinates ATP. ADP-binding residues include A119, K120, S121, and T122. The UDP-N-acetyl-alpha-D-muramoyl-L-alanine site is built by N143 and H188. ADP is bound by residues N278, R309, D324, and K326.

This sequence belongs to the MurCDEF family.

It is found in the cytoplasm. It carries out the reaction UDP-N-acetyl-alpha-D-muramoyl-L-alanine + D-glutamate + ATP = UDP-N-acetyl-alpha-D-muramoyl-L-alanyl-D-glutamate + ADP + phosphate + H(+). Its pathway is cell wall biogenesis; peptidoglycan biosynthesis. Its function is as follows. Involved in cell wall formation. Catalyzes the addition of D-glutamate to the peptidoglycan precursor UDP-N-acetylmuramoyl-L-alanine (UMA). The polypeptide is UDP-N-acetylmuramoylalanine--D-glutamate ligase (Pseudomonas aeruginosa (strain ATCC 15692 / DSM 22644 / CIP 104116 / JCM 14847 / LMG 12228 / 1C / PRS 101 / PAO1)).